Here is a 373-residue protein sequence, read N- to C-terminus: Lipoyl amidotransferase LIPT1, mitochondrial (373 aa).

A mitochondrion-targeting transit peptide spans 1–25 (MLIPFSMKNCFQLLCNLKVPAAGFK). Positions 57–243 (LEGKPVLFLW…EYATSHQIDN (187 aa)) constitute a BPL/LPL catalytic domain. Positions 107, 151, 161, 179, 208, and 210 each coordinate (R)-lipoyl-5'-AMP.

This sequence belongs to the LplA family.

It is found in the mitochondrion. It carries out the reaction N(6)-[(R)-lipoyl]-L-lysyl-[glycine-cleavage complex H protein] + L-lysyl-[lipoyl-carrier protein] = L-lysyl-[glycine-cleavage complex H protein] + N(6)-[(R)-lipoyl]-L-lysyl-[lipoyl-carrier protein]. The enzyme catalyses (R)-lipoyl-5'-AMP + L-lysyl-[lipoyl-carrier protein] = N(6)-[(R)-lipoyl]-L-lysyl-[lipoyl-carrier protein] + AMP + 2 H(+). It participates in protein modification; protein lipoylation via exogenous pathway; protein N(6)-(lipoyl)lysine from lipoate: step 2/2. Inhibited by lipoyl-AMP analogs including hexanoyl-, octanoyl- and decanoyl-AMP. Lipoyl amidotransferase that catalyzes the transfer of lipoyl moieties from lipoyl-protein H of the glycine cleavage system (lipoyl-GCSH) to E2 subunits of the pyruvate dehydrogenase complex (PDCE2). Unable to catalyze the transfer of octanoyl from octanoyl-GCSH to PDCE2. In vitro, it is also able to catalyze the transfer of the lipoyl group from lipoyl-AMP to the specific lysine residue of lipoyl domains of lipoate-dependent enzymes but this reaction may not be physiologically relevant. In Bos taurus (Bovine), this protein is Lipoyl amidotransferase LIPT1, mitochondrial (LIPT1).